A 691-amino-acid chain; its full sequence is Elongation factor G (691 aa).

Residues 8–282 form the tr-type G domain; that stretch reads NKTRNIGIMA…AVVEFLPAPV (275 aa). GTP contacts are provided by residues 17–24, 81–85, and 135–138; these read AHIDAGKT, DTPGH, and NKMD.

Belongs to the TRAFAC class translation factor GTPase superfamily. Classic translation factor GTPase family. EF-G/EF-2 subfamily.

It localises to the cytoplasm. In terms of biological role, catalyzes the GTP-dependent ribosomal translocation step during translation elongation. During this step, the ribosome changes from the pre-translocational (PRE) to the post-translocational (POST) state as the newly formed A-site-bound peptidyl-tRNA and P-site-bound deacylated tRNA move to the P and E sites, respectively. Catalyzes the coordinated movement of the two tRNA molecules, the mRNA and conformational changes in the ribosome. This is Elongation factor G from Heliobacterium modesticaldum (strain ATCC 51547 / Ice1).